We begin with the raw amino-acid sequence, 232 residues long: Small ribosomal subunit protein uS2 (232 aa).

It belongs to the universal ribosomal protein uS2 family.

The sequence is that of Small ribosomal subunit protein uS2 from Alkaliphilus oremlandii (strain OhILAs) (Clostridium oremlandii (strain OhILAs)).